A 437-amino-acid chain; its full sequence is Adenylosuccinate synthetase (437 aa).

GTP contacts are provided by residues 12–18 and 40–42; these read GDEGKGK and GHT. The active-site Proton acceptor is Asp-13. Residues Asp-13 and Gly-40 each contribute to the Mg(2+) site. IMP contacts are provided by residues 13–16, 38–41, Thr-128, Arg-142, Gln-223, Thr-238, and Arg-302; these read DEGK and NAGH. His-41 serves as the catalytic Proton donor. 298–304 contacts substrate; the sequence is TTTGRKR. Residues Arg-304, 330 to 332, and 412 to 414 each bind GTP; these read KLD and SLG.

Belongs to the adenylosuccinate synthetase family. As to quaternary structure, homodimer. Requires Mg(2+) as cofactor.

It is found in the cytoplasm. The enzyme catalyses IMP + L-aspartate + GTP = N(6)-(1,2-dicarboxyethyl)-AMP + GDP + phosphate + 2 H(+). The protein operates within purine metabolism; AMP biosynthesis via de novo pathway; AMP from IMP: step 1/2. Its function is as follows. Plays an important role in the de novo pathway of purine nucleotide biosynthesis. Catalyzes the first committed step in the biosynthesis of AMP from IMP. The sequence is that of Adenylosuccinate synthetase from Trichodesmium erythraeum (strain IMS101).